The primary structure comprises 653 residues: Splicing factor 1 (653 aa).

Disordered stretches follow at residues 1-44 and 65-94; these read MATG…PPGL and LRTGDLGIPPNPEDRSPSPEPIYNSEGKRL. Ala2 carries the post-translational modification N-acetylalanine. Ser14 is modified (phosphoserine). The short motif at 15 to 19 is the Nuclear localization signal element; the sequence is KKRKR. At Ser20 the chain carries Phosphoserine; by PKG. Phosphoserine is present on residues Ser80 and Ser82. A Phosphotyrosine modification is found at Tyr87. Residue Ser89 is modified to Phosphoserine. Residues 141 to 222 form the KH domain; that stretch reads MIPQDEYPEI…ENVKKAVEQI (82 aa). The CCHC-type zinc finger occupies 277-296; it reads TVCTKCGGAGHIASDCKFQR. Disordered regions lie at residues 325–584 and 611–653; these read VPAS…APPP and RIPP…GKAA. Over residues 335-350 the composition is skewed to low complexity; sequence PATTPLASAPRPAAPA. The segment covering 382–394 has biased composition (gly residues); it reads MHGGGPGGPGGGP. Composition is skewed to pro residues over residues 418–447 and 470–499; these read NGPPPPWMQPPPPPMNQGPHPPGHHGPPPM and MPPPPMGMMPPPPPPPSGQPPPPPSGPLPP. Low complexity predominate over residues 515-534; sequence SSMASSTPLPWQQNTTTTTT. The segment covering 567–584 has biased composition (pro residues); that stretch reads VPLPPGVQPPLPPGAPPP.

The protein belongs to the BBP/SF1 family. Binds U2AF2. Interacts with U1 snRNA. Interacts with RBM17. Binds EWSR1, FUS and TAF15. In terms of processing, phosphorylation on Ser-20 interferes with U2AF2 binding and spliceosome assembly. As to expression, detected at intermediate levels in spleen. Lower levels in heart, kidney, brain, liver, testis, bone marrow, adrenal gland, lymph nodes, pancreas and thymus.

It localises to the nucleus. Functionally, necessary for the ATP-dependent first step of spliceosome assembly. Binds to the intron branch point sequence (BPS) 5'-UACUAAC-3' of the pre-mRNA. May act as transcription repressor. The sequence is that of Splicing factor 1 (Sf1) from Mus musculus (Mouse).